Consider the following 463-residue polypeptide: Asparagine--tRNA ligase (463 aa).

Belongs to the class-II aminoacyl-tRNA synthetase family. Homodimer.

It is found in the cytoplasm. It carries out the reaction tRNA(Asn) + L-asparagine + ATP = L-asparaginyl-tRNA(Asn) + AMP + diphosphate + H(+). The polypeptide is Asparagine--tRNA ligase (Bacillus thuringiensis subsp. konkukian (strain 97-27)).